The chain runs to 459 residues: MYRENHHIHFVGIGGIGMSGIAELLLHLGYSVSGSDLRSSATTKRLQDLGATIYEGHQAASCAGASVVVTSSAVAEDNPEVVQAREDKIPVIPRAEMLAELMRLKTFGIAVAGSHGKTSTTSLIGCLLSQTGFDPTIVVGGKVDSFGGNAKLGEGDFLVAEADESDGSFLKLSPVLEVVTNIDLEHLDYYTDIEHIKETFLSFIDKIPFYGAAIVCLDDENVAAILPQVQKRLITYGLTPQADVSADNLRFAAGRSTFRVRAAGEVLGEISVFPSGTHNVYNALAAVAIGLELEIPFGKIATALASFGGVQRRMQHKGEGKGITVIDDYAHHPTEIRASLKAIKETWPEKRLVVLFQPHRYSRTQALFEEFKTCFHQADCLIMTDIYEASESPIEGVSTEILLEAIKAHGQRYTRHIPEIASLATEVMPNLREGDLVVTLGAGNIVQAGEEICQLLGQE.

113–119 serves as a coordination point for ATP; that stretch reads GSHGKTS.

The protein belongs to the MurCDEF family.

The protein localises to the cytoplasm. The enzyme catalyses UDP-N-acetyl-alpha-D-muramate + L-alanine + ATP = UDP-N-acetyl-alpha-D-muramoyl-L-alanine + ADP + phosphate + H(+). It functions in the pathway cell wall biogenesis; peptidoglycan biosynthesis. In terms of biological role, cell wall formation. The chain is UDP-N-acetylmuramate--L-alanine ligase from Desulfotalea psychrophila (strain LSv54 / DSM 12343).